Reading from the N-terminus, the 359-residue chain is MSMSGSKKDVESEKQKALDAAISQIERAFGRGAIMKLKQHPAEKMDSVSTGSIALDAALGIGGLPKGRIVEIFGPESSGKTTLALHVIAEAQKQGGNCAFIDAEHALDTVYARKLGVNVGDLIVSQPDTGEQALHIVEYLVCSGAIDVIVVDSVAALTPRAEIEGDMGDQHMGLQARLLSHALRKLTSVVSKANCILVFINQIRIKIGVIYGNPEVTTGGSALKFYTSIRLDIRKVSAIKDKDNVIGNQTRVKVVKNKVAPPFKQAEFDIVYNEGISKLGEIVDMGVKFGFVEKSGAHYSYGAVKLGQGRENAKGYLKSNPDIANELEQKIRACLAESMHSSDLFAVDERTDVLEEEVF.

74–81 (GPESSGKT) lines the ATP pocket.

It belongs to the RecA family.

The protein resides in the cytoplasm. In terms of biological role, can catalyze the hydrolysis of ATP in the presence of single-stranded DNA, the ATP-dependent uptake of single-stranded DNA by duplex DNA, and the ATP-dependent hybridization of homologous single-stranded DNAs. It interacts with LexA causing its activation and leading to its autocatalytic cleavage. The protein is Protein RecA of Anaplasma marginale (strain Florida).